The following is a 694-amino-acid chain: MTFETISVTLEEGKTLVFETGKIARQANGAVLARMQETWVFSSVCAANLEEAVDFLPLRVDYQEKFSSIGKTLGGFIKREGRPTEREILTSRLIDRSMRPSLPNRLMQDIQILSYVWSYDGVTLPDPIAICGVSAALAISDIPQTSIVAGVRVGFVNNRWVVNPTKAEMDVSRMELVLAGTENAILMIEGHCDFFTEEQVIEAIEFGHKHIVTICKALKDWQKHIGKEKNTSGIVSLPEEVQSAVNTFVEGKFVDLLKIKEKKAFEAASKQLENEVIEQLQEENEVFTAFNIKIAFKQAKSNFIRGLIREQGLRSDGRSVTTIRPISIDTSFLPRTHGSCLFTRGETQTMAVCTLGSEAMAQRYEDLNGEGLAKFYLQYFFPPFSVGEVGRIGSPGRREIGHGKLAEKALSHTLPDPMKFPYTIRIESNITESNGSSSMASVCGGCLALMDAGVPIKTPIAGIAMGLILEDDHVTILSDISGLEDHLGDMDFKVAGNTEGITAFQMDIKVEGITPDIMRAALAQAKEGRQDILETMKQALAAPKTDLSQYAPRIETMQIKPNKIATVIGPGGKQIRQIIEEAGVQIDINDSGLVSISASSPQAIEKAKSIIEGLVGEVEVGKIYEGRVTSVVPFGAFVEILPGKEGLCHISEFSKQRIDNVGDFVKQGDTLTVKLLSINEKGQYKLSHKATLSE.

2 residues coordinate Mg(2+): Asp-485 and Asp-491. The 60-residue stretch at 552–611 (PRIETMQIKPNKIATVIGPGGKQIRQIIEEAGVQIDINDSGLVSISASSPQAIEKAKSII) folds into the KH domain. Residues 621-689 (GKIYEGRVTS…EKGQYKLSHK (69 aa)) form the S1 motif domain.

The protein belongs to the polyribonucleotide nucleotidyltransferase family. Mg(2+) serves as cofactor.

The protein localises to the cytoplasm. The enzyme catalyses RNA(n+1) + phosphate = RNA(n) + a ribonucleoside 5'-diphosphate. Functionally, involved in mRNA degradation. Catalyzes the phosphorolysis of single-stranded polyribonucleotides processively in the 3'- to 5'-direction. This is Polyribonucleotide nucleotidyltransferase from Chlamydia abortus (strain DSM 27085 / S26/3) (Chlamydophila abortus).